The following is a 328-amino-acid chain: Cell cycle control protein 50A (328 aa).

The interval 1-28 (MAMNYSAKDEVDGGPTGPPGGAAKTRRP) is disordered. Alanine 2 is subject to N-acetylalanine. Residues 2–48 (AMNYSAKDEVDGGPTGPPGGAAKTRRPDNTAFKQQRLPAWQPILTAG) form a required for ATPase and aminophospholipid flippase activity region. Over 2–49 (AMNYSAKDEVDGGPTGPPGGAAKTRRPDNTAFKQQRLPAWQPILTAGT) the chain is Cytoplasmic. The segment at 49-315 (TVLPTFFIIG…LGVVLLVINH (267 aa)) is interaction with ATP8A2. The helical transmembrane segment at 50-70 (VLPTFFIIGLIFIPIGIGIFV) threads the bilayer. Residues 71–292 (TSNNIREIEG…SWMGGKNPFL (222 aa)) lie on the Exoplasmic loop side of the membrane. A disordered region spans residues 102–125 (RDDSQLNGDPSALLNPSKECEPYR). The cysteines at positions 121 and 135 are disulfide-linked. 2 N-linked (GlcNAc...) asparagine glycosylation sites follow: asparagine 144 and asparagine 261. Residues 293-313 (GIAYITIGSISFLLGVVLLVI) form a helical membrane-spanning segment. Residues 314–328 (NHKYRNSSNTADITI) are Cytoplasmic-facing.

Belongs to the CDC50/LEM3 family. As to quaternary structure, component of various P4-ATPase flippase complexes which consists of a catalytic alpha subunit and an accessory beta subunit. Interacts with ATP8A1 to form a flippase complex; this complex forms an intermediate phosphoenzyme. Interacts with ATP8A2 to form a flippase complex. TP8B1:TMEM30A and ATP8B2:TMEM30A flippase complexes have been shown to form intermediate phosphoenzymes in vitro. Interacts with alpha subunits ATP8A1, ATP8B1, ATP8B2, ATP8B4, ATP10A, ATP10B, ATP10D, ATP11A, ATP11B and ATP11C. In terms of processing, N-glycosylated. Contains high mannose-type oligosaccharides.

Its subcellular location is the membrane. The protein localises to the golgi apparatus. The protein resides in the cytoplasmic vesicle. It localises to the secretory vesicle membrane. It is found in the apical cell membrane. Its subcellular location is the photoreceptor inner segment. The protein localises to the cell projection. The protein resides in the cilium. It localises to the photoreceptor outer segment. In terms of biological role, accessory component of a P4-ATPase flippase complex which catalyzes the hydrolysis of ATP coupled to the transport of aminophospholipids from the outer to the inner leaflet of various membranes and ensures the maintenance of asymmetric distribution of phospholipids. Phospholipid translocation also seems to be implicated in vesicle formation and in uptake of lipid signaling molecules. The beta subunit may assist in binding of the phospholipid substrate. Required for the proper folding, assembly and ER to Golgi exit of the ATP8A2:TMEM30A flippase complex. ATP8A2:TMEM30A may be involved in regulation of neurite outgrowth, and, reconstituted to liposomes, predomiminantly transports phosphatidylserine (PS) and to a lesser extent phosphatidylethanolamine (PE). The ATP8A1:TMEM30A flippase complex seems to play a role in regulation of cell migration probably involving flippase-mediated translocation of phosphatidylethanolamine (PE) at the plasma membrane. Required for the formation of the ATP8A2, ATP8B1 and ATP8B2 P-type ATPAse intermediate phosphoenzymes. Involved in uptake of platelet-activating factor (PAF). Can also mediate the export of alpha subunits ATP8A1, ATP8B1, ATP8B2, ATP8B4, ATP10A, ATP10B, ATP10D, ATP11A, ATP11B and ATP11C from ER to other membrane localizations. The chain is Cell cycle control protein 50A from Rattus norvegicus (Rat).